Reading from the N-terminus, the 249-residue chain is Proteasome subunit alpha type-7 (249 aa).

The protein belongs to the peptidase T1A family. As to quaternary structure, the 26S proteasome consists of a 20S proteasome core and two 19S regulatory subunits. The 20S proteasome core is a barrel-shaped complex made of 28 subunits that are arranged in four stacked rings. The two outer rings are each formed by seven alpha subunits, and the two inner rings are formed by seven beta subunits. The proteolytic activity is exerted by three beta-subunits PSMB5, PSMB6 and PSMB7. PSMA7 interacts directly with the PSMG1-PSMG2 heterodimer which promotes 20S proteasome assembly. Interacts with HIF1A. Interacts with RAB7A. Interacts with PRKN. Interacts with ABL1 and ABL2. Interacts with EMAP2. Interacts with MAVS.

The protein resides in the cytoplasm. The protein localises to the nucleus. Its function is as follows. Component of the 20S core proteasome complex involved in the proteolytic degradation of most intracellular proteins. This complex plays numerous essential roles within the cell by associating with different regulatory particles. Associated with two 19S regulatory particles, forms the 26S proteasome and thus participates in the ATP-dependent degradation of ubiquitinated proteins. The 26S proteasome plays a key role in the maintenance of protein homeostasis by removing misfolded or damaged proteins that could impair cellular functions, and by removing proteins whose functions are no longer required. Associated with the PA200 or PA28, the 20S proteasome mediates ubiquitin-independent protein degradation. This type of proteolysis is required in several pathways including spermatogenesis (20S-PA200 complex) or generation of a subset of MHC class I-presented antigenic peptides (20S-PA28 complex). Inhibits the transactivation function of HIF-1A under both normoxic and hypoxia-mimicking conditions. The interaction with EMAP2 increases the proteasome-mediated HIF-1A degradation under the hypoxic conditions. Plays a role in hepatitis C virus internal ribosome entry site-mediated translation. Mediates nuclear translocation of the androgen receptor (AR) and thereby enhances androgen-mediated transactivation. Promotes MAVS degradation and thereby negatively regulates MAVS-mediated innate immune response. The protein is Proteasome subunit alpha type-7 (PSMA7) of Gallus gallus (Chicken).